A 540-amino-acid chain; its full sequence is Glucose-6-phosphate isomerase (540 aa).

The active-site Proton donor is the Glu-350. Active-site residues include His-381 and Lys-503.

Belongs to the GPI family.

Its subcellular location is the cytoplasm. The catalysed reaction is alpha-D-glucose 6-phosphate = beta-D-fructose 6-phosphate. It participates in carbohydrate biosynthesis; gluconeogenesis. It functions in the pathway carbohydrate degradation; glycolysis; D-glyceraldehyde 3-phosphate and glycerone phosphate from D-glucose: step 2/4. Its function is as follows. Catalyzes the reversible isomerization of glucose-6-phosphate to fructose-6-phosphate. The chain is Glucose-6-phosphate isomerase from Burkholderia ambifaria (strain MC40-6).